We begin with the raw amino-acid sequence, 36 residues long: Photosystem I reaction center subunit VIII (36 aa).

The helical transmembrane segment at 8–28 (SIFVPLVGLVFPAIAMASLFL) threads the bilayer.

It belongs to the PsaI family.

Its subcellular location is the plastid. The protein resides in the chloroplast thylakoid membrane. In terms of biological role, may help in the organization of the PsaL subunit. This Solanum bulbocastanum (Wild potato) protein is Photosystem I reaction center subunit VIII.